The sequence spans 373 residues: MSDNSKTRVVVGMSGGVDSSVTALLLKEQGYDVIGIFMKNWDDTDENGVCTATEDYKDVVAVADQIGIPYYSVNFEKEYWDRVFEYFLAEYRAGRTPNPDVMCNKEIKFKAFLDYAITLGADYVATGHYARVARDEDGTVHMLRGVDNGKDQTYFLSQLSQEQLQKTMFPLGHLEKPEVRKLAEEAGLSTAKKKDSTGICFIGEKNFKNFLSNYLPAQPGRMMTVDGRDMGEHAGLMYYTIGQRGGLGIGGQHGGDNAPWFVVGKDLSKNILYVGQGFYHDSLMSTSLEASQVHFTREMPEEFTLECTAKFRYRQPDSKVTVHVKGDKAEVIFAEPQRAITPGQAVVFYDGEECLGGGLIDNAYRDGQVCQYI.

ATP is bound by residues 12 to 19 and Met38; that span reads GMSGGVDS. The interval 98–100 is interaction with target base in tRNA; sequence NPD. The active-site Nucleophile is Cys103. The cysteines at positions 103 and 200 are disulfide-linked. Gly127 serves as a coordination point for ATP. An interaction with tRNA region spans residues 150 to 152; it reads KDQ. The active-site Cysteine persulfide intermediate is Cys200. Residues 312–313 form an interaction with tRNA region; the sequence is RY.

The protein belongs to the MnmA/TRMU family.

It localises to the cytoplasm. It catalyses the reaction S-sulfanyl-L-cysteinyl-[protein] + uridine(34) in tRNA + AH2 + ATP = 2-thiouridine(34) in tRNA + L-cysteinyl-[protein] + A + AMP + diphosphate + H(+). In terms of biological role, catalyzes the 2-thiolation of uridine at the wobble position (U34) of tRNA, leading to the formation of s(2)U34. The polypeptide is tRNA-specific 2-thiouridylase MnmA (Streptococcus pneumoniae (strain ATCC 700669 / Spain 23F-1)).